Reading from the N-terminus, the 325-residue chain is Ribosomal RNA small subunit methyltransferase H (325 aa).

Residues 45-47 (GGH), D65, Y92, D113, and Q120 each bind S-adenosyl-L-methionine.

This sequence belongs to the methyltransferase superfamily. RsmH family.

The protein resides in the cytoplasm. The catalysed reaction is cytidine(1402) in 16S rRNA + S-adenosyl-L-methionine = N(4)-methylcytidine(1402) in 16S rRNA + S-adenosyl-L-homocysteine + H(+). Specifically methylates the N4 position of cytidine in position 1402 (C1402) of 16S rRNA. The chain is Ribosomal RNA small subunit methyltransferase H from Oleidesulfovibrio alaskensis (strain ATCC BAA-1058 / DSM 17464 / G20) (Desulfovibrio alaskensis).